The chain runs to 322 residues: HPr kinase/phosphorylase (322 aa).

Catalysis depends on residues H142 and K163. 157-164 contacts ATP; it reads GASGVGKS. Mg(2+) is bound at residue S164. The active-site Proton acceptor; for phosphorylation activity. Proton donor; for dephosphorylation activity is the D181. An important for the catalytic mechanism of both phosphorylation and dephosphorylation region spans residues 205–214; the sequence is MEIRGIGIID. Position 206 (E206) interacts with Mg(2+). The active site involves R247. The tract at residues 268-273 is important for the catalytic mechanism of dephosphorylation; that stretch reads PVKVGR.

The protein belongs to the HPrK/P family. As to quaternary structure, homohexamer. Mg(2+) is required as a cofactor.

It catalyses the reaction [HPr protein]-L-serine + ATP = [HPr protein]-O-phospho-L-serine + ADP + H(+). The catalysed reaction is [HPr protein]-O-phospho-L-serine + phosphate + H(+) = [HPr protein]-L-serine + diphosphate. Catalyzes the ATP- as well as the pyrophosphate-dependent phosphorylation of a specific serine residue in HPr, a phosphocarrier protein of the phosphoenolpyruvate-dependent sugar phosphotransferase system (PTS). HprK/P also catalyzes the pyrophosphate-producing, inorganic phosphate-dependent dephosphorylation (phosphorolysis) of seryl-phosphorylated HPr (P-Ser-HPr). The two antagonistic activities of HprK/P are regulated by several intracellular metabolites, which change their concentration in response to the absence or presence of rapidly metabolisable carbon sources (glucose, fructose, etc.) in the growth medium. Therefore, by controlling the phosphorylation state of HPr, HPrK/P is a sensor enzyme that plays a major role in the regulation of carbon metabolism and sugar transport: it mediates carbon catabolite repression (CCR), and regulates PTS-catalyzed carbohydrate uptake and inducer exclusion. The protein is HPr kinase/phosphorylase of Lactobacillus acidophilus (strain ATCC 700396 / NCK56 / N2 / NCFM).